A 162-amino-acid chain; its full sequence is V-type proton ATPase subunit c' (162 aa).

At 1–11 (MSSNLCPIYSS) the chain is on the lumenal side. Residues 12 to 32 (FFGFAGVCASMVFSCLGAGYG) form a helical membrane-spanning segment. Over 33–54 (TALAGRGIAAVGAFRPEIVMKS) the chain is Cytoplasmic. A helical membrane pass occupies residues 55-75 (LIPVVMSGIIGVYGLVMSVLI). Topologically, residues 76 to 93 (AGDMSPDNDYSLFSGFIH) are lumenal. The helical transmembrane segment at 94-114 (LSAGLAVGLTGVAAGYAIGVV) threads the bilayer. Over 115–132 (GDRGVQSFMRQDRIFVSM) the chain is Cytoplasmic. Residues 133–153 (VLILIFAEVLGLYGLIVGLIL) form a helical membrane-spanning segment. Topologically, residues 154–162 (QTKTSNVCY) are lumenal.

This sequence belongs to the V-ATPase proteolipid subunit family. In terms of assembly, V-ATPase is a heteromultimeric enzyme composed of a peripheral catalytic V1 complex (components A to H) attached to an integral membrane V0 proton pore complex (components: a, c, c', c'', d, e, f and VOA1). The decameric c-ring forms the proton-conducting pore, and is composed of eight proteolipid subunits c, one subunit c' and one subunit c''.

It is found in the vacuole membrane. Proton-conducting pore forming subunit of the V0 complex of vacuolar(H+)-ATPase (V-ATPase), a multisubunit enzyme composed of a peripheral complex (V1) that hydrolyzes ATP and a membrane integral complex (V0) that translocates protons. V-ATPase is responsible for acidifying and maintaining the pH of intracellular compartments. In Schizosaccharomyces pombe (strain 972 / ATCC 24843) (Fission yeast), this protein is V-type proton ATPase subunit c'.